Consider the following 218-residue polypeptide: Trichothecene biosynthesis transcription regulator TRI6 (218 aa).

The interval 154 to 181 is disordered; sequence SQSTNDPGDAGKKGFATRKDRARHEAKH. A compositionally biased stretch (basic and acidic residues) spans 162 to 176; that stretch reads DAGKKGFATRKDRAR. A C2H2-type zinc finger spans residues 185–215; the sequence is IRCQWRDNNGDQCTRTFSRMDNMRDHFRRIH.

The protein localises to the nucleus. Its function is as follows. Transcriptional activator of part of the trichothecene biosynthesis cluster that mediates the production of the antimicrobial trichothecene harzianum A (HA) that plays a role in Botrytis cinerea antagonistic activity and plant defense priming. Regulates expression of both trichothecene and mevalonate pathway genes. This is Trichothecene biosynthesis transcription regulator TRI6 from Trichoderma arundinaceum.